The primary structure comprises 364 residues: Tripartite motif-containing protein 54 (364 aa).

The RING-type zinc-finger motif lies at 26–82 (CPICLEMFSKPVVILPCQHNLCRKCANDVFQASNPLWQSRGSTTVSSGGRFRCPSCR). A B box-type zinc finger spans residues 121–163 (EQHLMCEEHEDEKINIYCLSCEVPTCSLCKVFGAHKDCEVAPL). The Zn(2+) site is built by Cys-126, His-129, Cys-149, and His-155. A mediates microtubule-binding and homooligomerization region spans residues 168–211 (KRQKSELSDGIAMLVAGNDRVQAVITQMEEVCQTIEDNSRRQKQ). Positions 194-252 (QMEEVCQTIEDNSRRQKQLLNQKFETLCAVLEERKGELLQALARVQEEKLQRVRSLIRQ) form a coiled coil. Positions 271-329 (MEEPQMALYLQQAKELINKVGAMSKVELAGRPEPGYESMEQFSVIVEHVAEMLRTIDFQ) constitute a COS domain. The disordered stretch occupies residues 328 to 364 (FQPGASGDEEDDEVTLDGEEGNTGLEEERLDGPEGLH). A compositionally biased stretch (acidic residues) spans 334–347 (GDEEDDEVTLDGEE). A compositionally biased stretch (basic and acidic residues) spans 353 to 364 (EEERLDGPEGLH).

As to quaternary structure, homooligomer and heterooligomer. Interacts with TRIM63 and probably with TRIM55. Interacts with tubulin.

The protein localises to the cytoplasm. It localises to the cytoskeleton. It is found in the myofibril. The protein resides in the sarcomere. Its subcellular location is the z line. Its function is as follows. May bind and stabilize microtubules during myotubes formation. The chain is Tripartite motif-containing protein 54 (Trim54) from Rattus norvegicus (Rat).